Here is a 262-residue protein sequence, read N- to C-terminus: Shikimate dehydrogenase (NADP(+)) (262 aa).

Shikimate is bound by residues serine 14 to serine 16 and threonine 60. Residue lysine 64 is the Proton acceptor of the active site. Shikimate-binding residues include asparagine 85 and aspartate 100. NADP(+)-binding positions include glycine 121–alanine 125, asparagine 145–arginine 150, and phenylalanine 203. Tyrosine 205 provides a ligand contact to shikimate. NADP(+) is bound at residue glycine 227.

Belongs to the shikimate dehydrogenase family. As to quaternary structure, homodimer.

It catalyses the reaction shikimate + NADP(+) = 3-dehydroshikimate + NADPH + H(+). The protein operates within metabolic intermediate biosynthesis; chorismate biosynthesis; chorismate from D-erythrose 4-phosphate and phosphoenolpyruvate: step 4/7. Its function is as follows. Involved in the biosynthesis of the chorismate, which leads to the biosynthesis of aromatic amino acids. Catalyzes the reversible NADPH linked reduction of 3-dehydroshikimate (DHSA) to yield shikimate (SA). The protein is Shikimate dehydrogenase (NADP(+)) of Pyrobaculum aerophilum (strain ATCC 51768 / DSM 7523 / JCM 9630 / CIP 104966 / NBRC 100827 / IM2).